The chain runs to 259 residues: Tumor necrosis factor receptor superfamily member 10C (259 aa).

Positions 1-25 (MARIPKTLKFVVVIVAVLLPVLAYS) are cleaved as a signal peptide. TNFR-Cys repeat units lie at residues 29–66 (ARQEEVPQQTVAPQQQRHSFKGEECPAGSHRSEHTGAC), 69–109 (CTEG…DTVC), and 110–149 (QCKEGTFRNENSPEMCRKCSRCPSGEVQVSNCTSWDDIQC). Residues 30-45 (RQEEVPQQTVAPQQQR) show a composition bias toward polar residues. The segment at 30 to 56 (RQEEVPQQTVAPQQQRHSFKGEECPAG) is disordered. Cystine bridges form between Cys53–Cys66, Cys69–Cys85, Cys88–Cys101, Cys91–Cys109, Cys111–Cys125, Cys128–Cys141, and Cys131–Cys149. The N-linked (GlcNAc...) (high mannose) asparagine glycan is linked to Asn77. 2 N-linked (GlcNAc...) (high mannose) asparagine glycosylation sites follow: Asn140 and Asn156. Residues 160 to 224 (ETPAAEETMN…TSPGTPAPAA (65 aa)) form a disordered region. TAPE repeat units follow at residues 162–176 (PAAEETMNTSPGTPA), 177–191 (PAAEETMNTSPGTPA), 192–206 (PAAEETMTTSPGTPA), 207–221 (PAAEETMTTSPGTPA), and 222–236 (PAAEETMITSPGTPA). Residues 185 to 217 (TSPGTPAPAAEETMTTSPGTPAPAAEETMTTSP) are compositionally biased toward low complexity. A lipid anchor (GPI-anchor amidated alanine) is attached at Ala236. Positions 237–259 (SSHYLSCTIVGIIVLIVLLIVFV) are cleaved as a propeptide — removed in mature form.

Post-translationally, N-glycosylated and O-glycosylated. In terms of tissue distribution, higher expression in normal tissues than in tumor cell lines. Highly expressed in peripheral blood lymphocytes, spleen, skeletal muscle, placenta, lung and heart.

It is found in the cell membrane. Its function is as follows. Receptor for the cytotoxic ligand TRAIL. Lacks a cytoplasmic death domain and hence is not capable of inducing apoptosis. May protect cells against TRAIL mediated apoptosis by competing with TRAIL-R1 and R2 for binding to the ligand. The polypeptide is Tumor necrosis factor receptor superfamily member 10C (TNFRSF10C) (Homo sapiens (Human)).